Reading from the N-terminus, the 171-residue chain is Peptidyl-prolyl cis-trans isomerase slr1251 (171 aa).

Residues 6–169 form the PPIase cyclophilin-type domain; sequence FFDITIGSDT…QAIVISDCGE (164 aa).

The protein belongs to the cyclophilin-type PPIase family.

It catalyses the reaction [protein]-peptidylproline (omega=180) = [protein]-peptidylproline (omega=0). In terms of biological role, PPIases accelerate the folding of proteins. It catalyzes the cis-trans isomerization of proline imidic peptide bonds in oligopeptides. This chain is Peptidyl-prolyl cis-trans isomerase slr1251, found in Synechocystis sp. (strain ATCC 27184 / PCC 6803 / Kazusa).